Consider the following 92-residue polypeptide: CRISPR-associated endoribonuclease Cas2 3 (92 aa).

Residue Asp9 coordinates Mg(2+).

This sequence belongs to the CRISPR-associated endoribonuclease Cas2 protein family. As to quaternary structure, homodimer, forms a heterotetramer with a Cas1 homodimer. It depends on Mg(2+) as a cofactor.

Its function is as follows. CRISPR (clustered regularly interspaced short palindromic repeat), is an adaptive immune system that provides protection against mobile genetic elements (viruses, transposable elements and conjugative plasmids). CRISPR clusters contain sequences complementary to antecedent mobile elements and target invading nucleic acids. CRISPR clusters are transcribed and processed into CRISPR RNA (crRNA). Functions as a ssRNA-specific endoribonuclease. Involved in the integration of spacer DNA into the CRISPR cassette. This Synechocystis sp. (strain ATCC 27184 / PCC 6803 / Kazusa) protein is CRISPR-associated endoribonuclease Cas2 3.